A 507-amino-acid polypeptide reads, in one-letter code: E3 ubiquitin-protein ligase TRIM31 (507 aa).

The RING-type zinc finger occupies 16–56 (CPICMEILQDPVTIDCGHNFCLQCISQVGKTSEKIQCPLCK). The B box-type zinc-finger motif lies at 89–130 (KEDSRCQRHKEKLHYFCEQDGAFLCVVCRDSKDHKSHNVTLI). Residues Cys-94, His-97, Cys-116, and His-122 each coordinate Zn(2+). Coiled-coil stretches lie at residues 176–241 (EKLK…LQSS) and 269–298 (EDLEKKCSEAKARHESIIKTLTELKDDMNA). A B30.2/SPRY domain is found at 315-507 (EKESWSLLQK…VACSHITLSP (193 aa)).

This sequence belongs to the TRIM/RBCC family. As to quaternary structure, may form oligomers. Interacts with isoform p52shc of SHC1. Post-translationally, auto-ubiquitinated (in vitro). As to expression, highly expressed in the gastrointestrinal tract, with high expression in the small intestine, moderate in the large intestine and weak in the stomach and esophagus.

The protein localises to the cytoplasm. The protein resides in the mitochondrion. It catalyses the reaction S-ubiquitinyl-[E2 ubiquitin-conjugating enzyme]-L-cysteine + [acceptor protein]-L-lysine = [E2 ubiquitin-conjugating enzyme]-L-cysteine + N(6)-ubiquitinyl-[acceptor protein]-L-lysine.. It participates in protein modification; protein ubiquitination. In terms of biological role, E3 ubiquitin-protein ligase that acts as a regulator of antiviral immune response and inflammation by mediating ubiquitination of substrates. Acts as a regulator of innate immune defense against viruses by mediating 'Lys-63'-linked ubiquitination of MAVS, promoting MAVS polymerization and formation of three-stranded helical filaments on mitochondria. Acts as a negative regulator of the NLRP3 inflammasome by catalyzing 'Lys-48'-linked ubiquitination of NLRP3, leading to its degradation. Regulator of Src-induced anchorage independent cell growth. This chain is E3 ubiquitin-protein ligase TRIM31, found in Mus musculus (Mouse).